The chain runs to 355 residues: S-adenosylmethionine:tRNA ribosyltransferase-isomerase (355 aa).

This sequence belongs to the QueA family. Monomer.

The protein localises to the cytoplasm. The enzyme catalyses 7-aminomethyl-7-carbaguanosine(34) in tRNA + S-adenosyl-L-methionine = epoxyqueuosine(34) in tRNA + adenine + L-methionine + 2 H(+). It participates in tRNA modification; tRNA-queuosine biosynthesis. Functionally, transfers and isomerizes the ribose moiety from AdoMet to the 7-aminomethyl group of 7-deazaguanine (preQ1-tRNA) to give epoxyqueuosine (oQ-tRNA). This Jannaschia sp. (strain CCS1) protein is S-adenosylmethionine:tRNA ribosyltransferase-isomerase.